The sequence spans 71 residues: Large ribosomal subunit protein bL31 (71 aa).

Zn(2+) contacts are provided by C16, C18, C37, and C40.

Belongs to the bacterial ribosomal protein bL31 family. Type A subfamily. As to quaternary structure, part of the 50S ribosomal subunit. It depends on Zn(2+) as a cofactor.

Functionally, binds the 23S rRNA. This is Large ribosomal subunit protein bL31 from Yersinia pseudotuberculosis serotype O:1b (strain IP 31758).